Consider the following 320-residue polypeptide: Cytosolic Fe-S cluster assembly factor NUBP1 (320 aa).

An N-acetylmethionine modification is found at Met1. Residues Cys8, Cys22, Cys25, and Cys31 each contribute to the [4Fe-4S] cluster site. 62-69 (GKGGVGKS) provides a ligand contact to ATP. Positions 235 and 238 each coordinate [4Fe-4S] cluster.

Belongs to the Mrp/NBP35 ATP-binding proteins family. NUBP1/NBP35 subfamily. Heterotetramer of 2 NUBP1 and 2 NUBP2 chains. Interacts with KIFC1. Interacts with the BBS/CCT complex subunit CCT1. It depends on [4Fe-4S] cluster as a cofactor.

The protein localises to the cytoplasm. It is found in the nucleus. The protein resides in the cell projection. Its subcellular location is the cytoskeleton. It localises to the cilium axoneme. The protein localises to the cilium basal body. It is found in the microtubule organizing center. The protein resides in the centrosome. Its subcellular location is the centriole. Component of the cytosolic iron-sulfur (Fe/S) protein assembly (CIA) machinery. Required for maturation of extramitochondrial Fe-S proteins. The NUBP1-NUBP2 heterotetramer forms a Fe-S scaffold complex, mediating the de novo assembly of an Fe-S cluster and its transfer to target apoproteins. Implicated in the regulation of centrosome duplication. Negatively regulates cilium formation and structure. In Bos taurus (Bovine), this protein is Cytosolic Fe-S cluster assembly factor NUBP1.